The primary structure comprises 363 residues: Aminopyrrolnitrin oxygenase PrnD (363 aa).

The region spanning 29-137 (WYVAMRSNEL…TAERYGYVWV (109 aa)) is the Rieske domain. [2Fe-2S] cluster is bound by residues cysteine 69, histidine 71, cysteine 88, and histidine 91.

Homodimer. [2Fe-2S] cluster is required as a cofactor. It depends on Fe cation as a cofactor. Requires FMN as cofactor.

It catalyses the reaction aminopyrrolnitrin + NADPH + 2 O2 + H(+) = pyrrolnitrin + NADP(+) + 2 H2O. It participates in antibiotic biosynthesis. Its function is as follows. Involved in the biosynthesis of the antifungal antibiotic pyrrolnitrin (PRN). Catalyzes the oxidation of the amino group of aminopyrrolnitrin (APRN) to a nitro group to form PRN. It has high substrate specificity toward physiological substrate aminopyrrolnitrin, p-aminobenzylamine (pABA), p-aminobenzyl alcohol, and p-aminophenyl alanine. The sequence is that of Aminopyrrolnitrin oxygenase PrnD (prnD) from Pseudomonas fluorescens.